A 275-amino-acid polypeptide reads, in one-letter code: Transcription regulator AOL_s00215g275 (275 aa).

Disordered stretches follow at residues 13-65 (TPLP…SSIG) and 84-108 (ILQQ…RQRL). A compositionally biased stretch (polar residues) spans 14–26 (PLPSLNSSRSPQR). A compositionally biased stretch (low complexity) spans 27 to 40 (TPSLGSSSTSSLSP). Positions 47–60 (TPSTPESNDSGLTL) are enriched in polar residues. Residues 88–106 (KSRHQNQPSRRHKQKNRRQ) show a composition bias toward basic residues.

Regulatory protein; part of the gene cluster that mediates the biosynthesis of sesquiterpenyl epoxy-cyclohexenoids (SECs) such as anthrobotrisins and arthrosporols, metabolites that possess a novel hybrid carbon skeleton consisting of a polyketide-derived epoxycyclohexenol combined with a terpenoid-derived monocyclic sesquiterpenol substructure (PKS-PTS hybrid). The SEC pathway plays an important role for fungal soil colonization via decreasing fungal nematode-capturing ability. AOL_s00215g275 can perform multiple functions in fungal growth and development via regulating the SEC biosynthesis, TCA cycle, and septa formation. Also involved in inhibiting conidial formation, germination, and nematicidal activity but promotes trap production. Plays a role in fungal resistances and significantly regulates the fungal morphology and responses to chemical stressors such as cell-wall-perturbing agents (SDS and Congo red), osmotic agents (NaCl and sorbitol), or the oxidant H(2)O(2). This chain is Transcription regulator AOL_s00215g275, found in Arthrobotrys oligospora (strain ATCC 24927 / CBS 115.81 / DSM 1491) (Nematode-trapping fungus).